Reading from the N-terminus, the 157-residue chain is Transcriptional regulator AzlB (157 aa).

An HTH asnC-type domain is found at 5 to 66 (LDETDKAILR…IVDEKKLGIE (62 aa)). A DNA-binding region (H-T-H motif) is located at residues 24 to 43 (NLNLSKKIGLSPSACLARTK).

Transcriptional repressor of the azlBCD operon involved in branched-chain amino acid transport. This Bacillus subtilis (strain 168) protein is Transcriptional regulator AzlB (azlB).